The sequence spans 90 residues: MNEIKNQIITEKTIRLLQKNQYTFNVDSKLTKTKIKDWIERFFDVKVKSINSLRSPRKKSQKRLPQTSLNDKRMIITLKPEYSIPLFINE.

It belongs to the universal ribosomal protein uL23 family. As to quaternary structure, part of the 50S ribosomal subunit.

The protein localises to the plastid. It localises to the chloroplast. Binds to 23S rRNA. The protein is Large ribosomal subunit protein uL23c (rpl23) of Psilotum nudum (Whisk fern).